A 175-amino-acid chain; its full sequence is NADH dehydrogenase [ubiquinone] iron-sulfur protein 4, mitochondrial (175 aa).

The N-terminal 42 residues, 1 to 42, are a transit peptide targeting the mitochondrion; the sequence is MAAVSMSVALRQALWGRRVATVAAVSVSKVSTRSLSTSTWRL. The tract at residues 149-175 is disordered; that stretch reads ERKVPKPKSKSYGANFSWNKRTRVSTK. Ser-173 bears the Phosphoserine mark.

It belongs to the complex I NDUFS4 subunit family. Mammalian complex I is composed of 45 different subunits. This is a component of the iron-sulfur (IP) fragment of the enzyme. Interacts with BCAP31 and TOMM40; the interaction mediates its translocation to the mitochondria; the interaction with BCAP31 is direct. Post-translationally, phosphorylated.

It is found in the mitochondrion inner membrane. Functionally, accessory subunit of the mitochondrial membrane respiratory chain NADH dehydrogenase (Complex I), that is believed not to be involved in catalysis. Complex I functions in the transfer of electrons from NADH to the respiratory chain. The immediate electron acceptor for the enzyme is believed to be ubiquinone. The protein is NADH dehydrogenase [ubiquinone] iron-sulfur protein 4, mitochondrial (NDUFS4) of Bos taurus (Bovine).